The primary structure comprises 371 residues: Bifunctional enzyme IspD/IspF (371 aa).

Residues 1–210 (MSEISLIMLA…LDLPKPSFEI (210 aa)) form a 2-C-methyl-D-erythritol 4-phosphate cytidylyltransferase region. Residues 211–371 (FTGNGFDVHE…NLKYFDWTRL (161 aa)) are 2-C-methyl-D-erythritol 2,4-cyclodiphosphate synthase. A divalent metal cation contacts are provided by Asp217 and His219. Residues 217–219 (DVH) and 243–244 (HS) each bind 4-CDP-2-C-methyl-D-erythritol 2-phosphate. His251 contributes to the a divalent metal cation binding site. 4-CDP-2-C-methyl-D-erythritol 2-phosphate contacts are provided by residues 265-267 (DIG), 270-274 (YPDTD), 341-344 (TTTE), Phe348, and Arg351.

This sequence in the N-terminal section; belongs to the IspD/TarI cytidylyltransferase family. IspD subfamily. In the C-terminal section; belongs to the IspF family. Requires a divalent metal cation as cofactor.

The catalysed reaction is 2-C-methyl-D-erythritol 4-phosphate + CTP + H(+) = 4-CDP-2-C-methyl-D-erythritol + diphosphate. It carries out the reaction 4-CDP-2-C-methyl-D-erythritol 2-phosphate = 2-C-methyl-D-erythritol 2,4-cyclic diphosphate + CMP. The protein operates within isoprenoid biosynthesis; isopentenyl diphosphate biosynthesis via DXP pathway; isopentenyl diphosphate from 1-deoxy-D-xylulose 5-phosphate: step 2/6. It participates in isoprenoid biosynthesis; isopentenyl diphosphate biosynthesis via DXP pathway; isopentenyl diphosphate from 1-deoxy-D-xylulose 5-phosphate: step 4/6. In terms of biological role, bifunctional enzyme that catalyzes the formation of 4-diphosphocytidyl-2-C-methyl-D-erythritol from CTP and 2-C-methyl-D-erythritol 4-phosphate (MEP) (IspD), and catalyzes the conversion of 4-diphosphocytidyl-2-C-methyl-D-erythritol 2-phosphate (CDP-ME2P) to 2-C-methyl-D-erythritol 2,4-cyclodiphosphate (ME-CPP) with a corresponding release of cytidine 5-monophosphate (CMP) (IspF). This chain is Bifunctional enzyme IspD/IspF, found in Campylobacter jejuni subsp. doylei (strain ATCC BAA-1458 / RM4099 / 269.97).